The following is a 133-amino-acid chain: Large ribosomal subunit protein bL17 (133 aa).

Belongs to the bacterial ribosomal protein bL17 family. As to quaternary structure, part of the 50S ribosomal subunit. Contacts protein L32.

This is Large ribosomal subunit protein bL17 from Polaromonas naphthalenivorans (strain CJ2).